Here is a 263-residue protein sequence, read N- to C-terminus: Shikimate dehydrogenase (NADP(+)) (263 aa).

Shikimate contacts are provided by residues 21–23 and threonine 67; that span reads TLS. The Proton acceptor role is filled by lysine 71. Position 83 (glutamate 83) interacts with NADP(+). Residues asparagine 92 and aspartate 103 each contribute to the shikimate site. Residues 126 to 130 and leucine 204 each bind NADP(+); that span reads GAGGA. A shikimate-binding site is contributed by tyrosine 206. NADP(+) is bound at residue glycine 227.

The protein belongs to the shikimate dehydrogenase family. As to quaternary structure, homodimer.

It catalyses the reaction shikimate + NADP(+) = 3-dehydroshikimate + NADPH + H(+). It participates in metabolic intermediate biosynthesis; chorismate biosynthesis; chorismate from D-erythrose 4-phosphate and phosphoenolpyruvate: step 4/7. Functionally, involved in the biosynthesis of the chorismate, which leads to the biosynthesis of aromatic amino acids. Catalyzes the reversible NADPH linked reduction of 3-dehydroshikimate (DHSA) to yield shikimate (SA). In Sulfolobus acidocaldarius (strain ATCC 33909 / DSM 639 / JCM 8929 / NBRC 15157 / NCIMB 11770), this protein is Shikimate dehydrogenase (NADP(+)).